The following is a 525-amino-acid chain: Patatin-like protein 8 (525 aa).

The interval 1–50 (MNRRYEKPPPLSVSSKGKKKHFVNHTAPNTPGNYERTQTSPTLSTARSHE) is disordered. Over residues 26-46 (TAPNTPGNYERTQTSPTLSTA) the composition is skewed to polar residues. The region spanning 124 to 338 (LSIDGGGMRG…AMSNPTAAAI (215 aa)) is the PNPLA domain. A GXGXXG motif is present at residues 128-133 (GGGMRG). The Nucleophile role is filled by Ser-168.

Belongs to the patatin family. In terms of tissue distribution, specifically expressed in roots.

Its function is as follows. Possesses non-specific lipolytic acyl hydrolase (LAH) activity. Hydrolyzes phospholipids as well as galactolipids. May play a role in disease resistance. This is Patatin-like protein 8 (PLP8) from Arabidopsis thaliana (Mouse-ear cress).